Here is a 401-residue protein sequence, read N- to C-terminus: Lipid-A-disaccharide synthase (401 aa).

It belongs to the LpxB family.

It carries out the reaction a lipid X + a UDP-2-N,3-O-bis[(3R)-3-hydroxyacyl]-alpha-D-glucosamine = a lipid A disaccharide + UDP + H(+). Its pathway is bacterial outer membrane biogenesis; LPS lipid A biosynthesis. Its function is as follows. Condensation of UDP-2,3-diacylglucosamine and 2,3-diacylglucosamine-1-phosphate to form lipid A disaccharide, a precursor of lipid A, a phosphorylated glycolipid that anchors the lipopolysaccharide to the outer membrane of the cell. This Ruegeria pomeroyi (strain ATCC 700808 / DSM 15171 / DSS-3) (Silicibacter pomeroyi) protein is Lipid-A-disaccharide synthase.